Here is a 293-residue protein sequence, read N- to C-terminus: Small ribosomal subunit biogenesis GTPase RsgA (293 aa).

In terms of domain architecture, CP-type G spans 63–223 (KNQLNRPPIA…VADTPGFSSL (161 aa)). Residues 112-115 (SKTD) and 166-174 (GQSGVGKSS) contribute to the GTP site. Residues cysteine 247, cysteine 252, histidine 254, and cysteine 260 each coordinate Zn(2+).

It belongs to the TRAFAC class YlqF/YawG GTPase family. RsgA subfamily. As to quaternary structure, monomer. Associates with 30S ribosomal subunit, binds 16S rRNA. Zn(2+) serves as cofactor.

The protein resides in the cytoplasm. Its function is as follows. One of several proteins that assist in the late maturation steps of the functional core of the 30S ribosomal subunit. Helps release RbfA from mature subunits. May play a role in the assembly of ribosomal proteins into the subunit. Circularly permuted GTPase that catalyzes slow GTP hydrolysis, GTPase activity is stimulated by the 30S ribosomal subunit. In Shouchella clausii (strain KSM-K16) (Alkalihalobacillus clausii), this protein is Small ribosomal subunit biogenesis GTPase RsgA.